The chain runs to 141 residues: Nucleoside diphosphate kinase (141 aa).

ATP is bound by residues Lys-11, Phe-59, Arg-87, Thr-93, Arg-104, and Asn-114. The active-site Pros-phosphohistidine intermediate is His-117.

This sequence belongs to the NDK family. Homotetramer. Mg(2+) serves as cofactor.

The protein resides in the cytoplasm. It catalyses the reaction a 2'-deoxyribonucleoside 5'-diphosphate + ATP = a 2'-deoxyribonucleoside 5'-triphosphate + ADP. It carries out the reaction a ribonucleoside 5'-diphosphate + ATP = a ribonucleoside 5'-triphosphate + ADP. Major role in the synthesis of nucleoside triphosphates other than ATP. The ATP gamma phosphate is transferred to the NDP beta phosphate via a ping-pong mechanism, using a phosphorylated active-site intermediate. The protein is Nucleoside diphosphate kinase of Pseudomonas entomophila (strain L48).